Here is a 95-residue protein sequence, read N- to C-terminus: Mammaglobin-B (95 aa).

A signal peptide spans 1–18 (MKLLMVLMLAALLLHCYA). N-linked (GlcNAc...) asparagine glycosylation occurs at N68.

In terms of assembly, heterodimer of a lipophilin A and a lipophilin C (mammaglobin B) monomer associated head to head. Expressed in thymus, trachea, kidney, steroid responsive tissues (prostate, testis, uterus, breast and ovary) and salivary gland.

The protein resides in the secreted. In terms of biological role, may bind androgens and other steroids, may also bind estramustine, a chemotherapeutic agent used for prostate cancer. May be under transcriptional regulation of steroid hormones. This is Mammaglobin-B (SCGB2A1) from Homo sapiens (Human).